Reading from the N-terminus, the 372-residue chain is MENQPQNKPIIELRSIKKSYGSNTIINDFNLAINNGEFVTILGPSGCGKTTVLRLLAGLEELDSGSIILDGEDITNVPAEKRHINTVFQSYALFPHMTIFENVAFGLRMQKVPNEEIKPRVLEALRMVQLEEMADRKPTQLSGGQQQRIAIARAVVNKPKVLLLDESLSALDYKLRKQMQQELKMLQRQLGITFIFVTHDQEEAITMSDRIVLLRKGKIAQDGSPREIYEDPANLFVARFIGEINVFEATVIERKSEQVVLANVEGRICDIYTDMPVEKDQKLQVLLRPEDIVIEELDENEHSKAIIGHIIDRTYKGMTLESTVEFDHNGMRVLVSEFFNEDDPHMDHSIGQRVGITWHEGWEVVLNDEDNQ.

Residues 11 to 241 enclose the ABC transporter domain; the sequence is IELRSIKKSY…PANLFVARFI (231 aa). Position 43 to 50 (43 to 50) interacts with ATP; that stretch reads GPSGCGKT.

The protein belongs to the ABC transporter superfamily. Spermidine/putrescine importer (TC 3.A.1.11.1) family. The complex is composed of two ATP-binding proteins (PotA), two transmembrane proteins (PotB and PotC) and a solute-binding protein (PotD).

It localises to the cell inner membrane. The catalysed reaction is ATP + H2O + polyamine-[polyamine-binding protein]Side 1 = ADP + phosphate + polyamineSide 2 + [polyamine-binding protein]Side 1.. Its function is as follows. Part of the ABC transporter complex PotABCD involved in spermidine/putrescine import. Responsible for energy coupling to the transport system. In Haemophilus influenzae (strain 86-028NP), this protein is Spermidine/putrescine import ATP-binding protein PotA.